Reading from the N-terminus, the 565-residue chain is NAD-dependent malic enzyme (565 aa).

Tyr104 (proton donor) is an active-site residue. Position 157 (Arg157) interacts with NAD(+). Lys175 serves as the catalytic Proton acceptor. The a divalent metal cation site is built by Glu246, Asp247, and Asp270. The NAD(+) site is built by Asp270 and Asn418.

Belongs to the malic enzymes family. As to quaternary structure, homotetramer. Mg(2+) serves as cofactor. Requires Mn(2+) as cofactor.

It catalyses the reaction (S)-malate + NAD(+) = pyruvate + CO2 + NADH. The catalysed reaction is oxaloacetate + H(+) = pyruvate + CO2. The protein is NAD-dependent malic enzyme of Salmonella choleraesuis (strain SC-B67).